The primary structure comprises 456 residues: 3-isopropylmalate dehydratase large subunit (456 aa).

3 residues coordinate [4Fe-4S] cluster: C336, C396, and C399.

This sequence belongs to the aconitase/IPM isomerase family. LeuC type 1 subfamily. As to quaternary structure, heterodimer of LeuC and LeuD. Requires [4Fe-4S] cluster as cofactor.

The enzyme catalyses (2R,3S)-3-isopropylmalate = (2S)-2-isopropylmalate. It functions in the pathway amino-acid biosynthesis; L-leucine biosynthesis; L-leucine from 3-methyl-2-oxobutanoate: step 2/4. Its function is as follows. Catalyzes the isomerization between 2-isopropylmalate and 3-isopropylmalate, via the formation of 2-isopropylmaleate. In Staphylococcus haemolyticus (strain JCSC1435), this protein is 3-isopropylmalate dehydratase large subunit.